The following is a 432-amino-acid chain: G-protein coupled receptor 22 (432 aa).

Over 1–45 the chain is Extracellular; that stretch reads MCFSPVLEINMQSESNVTVRDDIDDIDTNMYQPLSYPLSFQVSLT. Asn16 carries an N-linked (GlcNAc...) asparagine glycan. Residues 46-66 traverse the membrane as a helical segment; it reads GFLMLEIVLGLGSNLTVLVLY. Topologically, residues 67–85 are cytoplasmic; it reads CMKSNLINSVSNIITMNLH. The helical transmembrane segment at 86 to 106 threads the bilayer; sequence VLDVIICVGCIPLTIVILLLS. Residues 107-115 are Extracellular-facing; it reads LESNTALIC. Residues 116-136 form a helical membrane-spanning segment; the sequence is CFHEACVSFASVSTAINVFAI. At 137–156 the chain is on the cytoplasmic side; the sequence is TLDRYDISVKPANRILTMGR. Residues 157-177 form a helical membrane-spanning segment; sequence AVMLMTSIWIFSFFSFLIPFI. At 178–208 the chain is on the extracellular side; the sequence is EVNFFSLQSGNTWANKTLLCVSTSEYYTELG. An N-linked (GlcNAc...) asparagine glycan is attached at Asn192. A helical transmembrane segment spans residues 209–229; the sequence is MYYHLLVQIPIFFFTVIVMLI. At 230–314 the chain is on the cytoplasmic side; it reads TYTKILQALN…ERQKRVFKMS (85 aa). Residues 315–335 form a helical membrane-spanning segment; it reads LLIISTFLLCWTPISVLNTTI. Over 336-348 the chain is Extracellular; the sequence is LCLGPSDLLVKLR. Residues 349 to 369 traverse the membrane as a helical segment; the sequence is LCFLVMAYGTTIFHPLLYAFT. Residues 370–432 lie on the Cytoplasmic side of the membrane; the sequence is RQKFQKVLKS…KCLVPQVVTD (63 aa).

This sequence belongs to the G-protein coupled receptor 1 family. As to expression, abundant levels detected in the brain and heart and no detectable expression in other peripheral tissues.

Its subcellular location is the cell membrane. Orphan G-protein coupled receptor. Seems to act through a G(i)/G(o) mediated pathway. May be involved in ciliogenesis. This Mus musculus (Mouse) protein is G-protein coupled receptor 22 (Gpr22).